We begin with the raw amino-acid sequence, 155 residues long: S-ribosylhomocysteine lyase (155 aa).

Fe cation contacts are provided by H54, H58, and C122.

The protein belongs to the LuxS family. Homodimer. Requires Fe cation as cofactor.

The enzyme catalyses S-(5-deoxy-D-ribos-5-yl)-L-homocysteine = (S)-4,5-dihydroxypentane-2,3-dione + L-homocysteine. Its function is as follows. Involved in the synthesis of autoinducer 2 (AI-2) which is secreted by bacteria and is used to communicate both the cell density and the metabolic potential of the environment. The regulation of gene expression in response to changes in cell density is called quorum sensing. Catalyzes the transformation of S-ribosylhomocysteine (RHC) to homocysteine (HC) and 4,5-dihydroxy-2,3-pentadione (DPD). The chain is S-ribosylhomocysteine lyase from Deinococcus deserti (strain DSM 17065 / CIP 109153 / LMG 22923 / VCD115).